The primary structure comprises 99 residues: Protein Frey (99 aa).

A helical transmembrane segment spans residues 13–29 (AGLSLFALYLVLAAALL). Residues 64-90 (RPKHPWPRGPRPLLSRAQQRKRDGPDM) are disordered.

Interacts with SPPL2C (via active sites); the interaction stabilizes FREY1 protein and inhibits SPPL2C proteolytic activity. Interacts with IZUMO1; the interaction retains IZUMO1 at the endoplasmic reticulum membrane and coordinates IZUMO1 complex assembly.

It is found in the endoplasmic reticulum membrane. Key regulator for male fertility expressed transiently in round spermatids where it recruits IZUMO1 at the endoplasmic reticulum (ER) membrane and coordinates the oolemmal binding multimeric complex (IZUMO1 complex) assembly. Upon complete assembly of the IZUMO1 complex, its ER retention is released, facilitating IZUMO1 complex export to the acrosome. Through the interaction with SPPL2C, inhibits its intramembrane protease activity directly accessing the catalytic center of an I-CLiP. The polypeptide is Protein Frey (FREY1) (Bos taurus (Bovine)).